The sequence spans 176 residues: Protein GrpE (176 aa).

Residues 1 to 28 are disordered; it reads MSEQKQEFENENAENSEHLQDENLQNIE.

It belongs to the GrpE family. Homodimer.

The protein resides in the cytoplasm. Participates actively in the response to hyperosmotic and heat shock by preventing the aggregation of stress-denatured proteins, in association with DnaK and GrpE. It is the nucleotide exchange factor for DnaK and may function as a thermosensor. Unfolded proteins bind initially to DnaJ; upon interaction with the DnaJ-bound protein, DnaK hydrolyzes its bound ATP, resulting in the formation of a stable complex. GrpE releases ADP from DnaK; ATP binding to DnaK triggers the release of the substrate protein, thus completing the reaction cycle. Several rounds of ATP-dependent interactions between DnaJ, DnaK and GrpE are required for fully efficient folding. The polypeptide is Protein GrpE (Campylobacter jejuni subsp. jejuni serotype O:2 (strain ATCC 700819 / NCTC 11168)).